We begin with the raw amino-acid sequence, 401 residues long: Solute carrier family 22 member 17 (401 aa).

The next 10 helical transmembrane spans lie at 10 to 30, 35 to 55, 69 to 89, 100 to 120, 184 to 203, 218 to 238, 247 to 267, 277 to 297, 309 to 329, and 336 to 356; these read GIVL…AAAG, IMAL…GVYL, VALA…GLAL, MITA…FLES, NIWK…HAIR, FYLC…FLGV, GILL…LGLW, TFSV…TLLA, GLGL…AQRL, and FLQH…IMLL.

The protein belongs to the major facilitator (TC 2.A.1) superfamily. Organic cation transporter (TC 2.A.1.19) family. Widely expressed.

It is found in the cell membrane. Its subcellular location is the vacuole membrane. In terms of biological role, cell surface receptor for LCN2 (24p3) that plays a key role in iron homeostasis and transport. Able to bind iron-bound LCN2 (holo-24p3), followed by internalization of holo-24p3 and release of iron, thereby increasing intracellular iron concentration and leading to inhibition of apoptosis. Also binds iron-free LCN2 (apo-24p3), followed by internalization of apo-24p3 and its association with an intracellular siderophore, leading to iron chelation and iron transfer to the extracellular medium, thereby reducing intracellular iron concentration and resulting in apoptosis. This Mus musculus (Mouse) protein is Solute carrier family 22 member 17 (Slc22a17).